The primary structure comprises 88 residues: Small ribosomal subunit protein bS20 (88 aa).

This sequence belongs to the bacterial ribosomal protein bS20 family.

In terms of biological role, binds directly to 16S ribosomal RNA. This chain is Small ribosomal subunit protein bS20, found in Clostridium acetobutylicum (strain ATCC 824 / DSM 792 / JCM 1419 / IAM 19013 / LMG 5710 / NBRC 13948 / NRRL B-527 / VKM B-1787 / 2291 / W).